A 92-amino-acid chain; its full sequence is Acylphosphatase (92 aa).

In terms of domain architecture, Acylphosphatase-like spans alanine 4–glycine 92. Active-site residues include arginine 19 and asparagine 37.

The protein belongs to the acylphosphatase family.

It catalyses the reaction an acyl phosphate + H2O = a carboxylate + phosphate + H(+). The protein is Acylphosphatase (acyP) of Latilactobacillus sakei subsp. sakei (strain 23K) (Lactobacillus sakei subsp. sakei).